The chain runs to 52 residues: Thiocillin (52 aa).

The propeptide occupies 1 to 38 (MSEIKKALNTLEIEDFDAIEMVDVDAMPENEALEIMGA). Residues 39–40 (SC) constitute a cross-link (thiazole-4-carboxylic acid (Ser-Cys)). Positions 39–47 (SCTTCVCTC) form a cross-link, pyridine-2,5-dicarboxylic acid (Ser-Cys) (with S-48). The pyridine-2,5-dicarboxylic acid (Ser-Ser) (with C-47) cross-link spans 39-48 (SCTTCVCTCS). T42 is modified ((Z)-2,3-didehydrobutyrine). Residues 42-43 (TC) constitute a cross-link (thiazole-4-carboxylic acid (Thr-Cys)). V44 is subject to 3-hydroxyvaline (Val); partial. A cross-link (thiazole-4-carboxylic acid (Val-Cys)) is located at residues 44 to 45 (VC). T46 is modified (O-methylthreonine; partial). A cross-link (thiazole-4-carboxylic acid (Thr-Cys)) is located at residues 46-47 (TC). The segment at residues 48-49 (SC) is a cross-link (thiazole-4-carboxylic acid (Ser-Cys)). The segment at residues 49–50 (CC) is a cross-link (thiazole-4-carboxylic acid (Cys-Cys)). T51 is modified ((Z)-2,3-didehydrobutyrine). At T52 the chain carries 1-amino-2-propanone; alternate. T52 is subject to Decarboxylated threonine; alternate.

The protein belongs to the thiocillin family. Maturation of thiazole and oxazole containing antibiotics involves the enzymatic condensation of a Cys, Ser or Thr with the alpha-carbonyl of the preceding amino acid to form a thioether or ether bond, then dehydration to form a double bond with the alpha-amino nitrogen. Thiazoline or oxazoline ring are dehydrogenated to form thiazole or oxazole rings. In terms of processing, maturation of pyridinyl containing antibiotics involves the cross-linking of a Ser and a Cys-Ser pair usually separated by 7 or 8 residues along the peptide chain. The Ser residues are dehydrated to didehydroalanines, then bonded between their beta carbons. The alpha carbonyl of the Cys condenses with alpha carbon of the first Ser to form a pyridinyl ring. The ring may be multiply dehydrogenated to form a pyridine ring with loss of the amino nitrogen of the first Ser. Post-translationally, the 8 possible modification isomers, differing in the presence of modifications at three positions, have been characterized in PubMed:19196969. Val-44 is modified to 3-hydroxyvaline in forms thiocillin I, thiocillin II, YM-266183, and YM-266184. Thr-46 is modified to O-methylthreonine in forms thiocillin II, thiocillin III, thiocillin IV, and YM-266184. Thr-52 is decarboxylated to (R)-1-aminopropan-2-ol in forms micrococcin P1, thiocillin I, thiocillin II, and thiocillin III. Thr-52 is decarboxylated and oxidized to 1-amino-2-propanone in forms micrococcin P2, YM-266183, YM-266184. and thiocillin IV. The structure of 2,3-didehydrobutyrines is not discussed in PubMed:19196969. However, in Fig. 3 the residues are diagrammed as Z-isomers.

It localises to the secreted. Functionally, has bacteriocidal activity against Gram-positive bacteria, but not against Gram-negative bacteria. Inhibits bacterial protein biosynthesis by acting on the elongation factor Tu (EF-Tu). This Bacillus cereus (strain ATCC 14579 / DSM 31 / CCUG 7414 / JCM 2152 / NBRC 15305 / NCIMB 9373 / NCTC 2599 / NRRL B-3711) protein is Thiocillin.